We begin with the raw amino-acid sequence, 249 residues long: Phosphate import ATP-binding protein PstB 2 (249 aa).

An ABC transporter domain is found at 4 to 244 (FEVTHLNLFY…PKDHRTQGYV (241 aa)). An ATP-binding site is contributed by 36-43 (GPSGCGKS).

It belongs to the ABC transporter superfamily. Phosphate importer (TC 3.A.1.7) family. In terms of assembly, the complex is composed of two ATP-binding proteins (PstB), two transmembrane proteins (PstC and PstA) and a solute-binding protein (PstS).

It localises to the cell inner membrane. It carries out the reaction phosphate(out) + ATP + H2O = ADP + 2 phosphate(in) + H(+). Its function is as follows. Part of the ABC transporter complex PstSACB involved in phosphate import. Responsible for energy coupling to the transport system. The protein is Phosphate import ATP-binding protein PstB 2 of Shewanella oneidensis (strain ATCC 700550 / JCM 31522 / CIP 106686 / LMG 19005 / NCIMB 14063 / MR-1).